Here is a 685-residue protein sequence, read N- to C-terminus: Polyphosphate kinase (685 aa).

Position 45 (Asn-45) interacts with ATP. Arg-375 and Arg-405 together coordinate Mg(2+). Catalysis depends on His-435, which acts as the Phosphohistidine intermediate. Residues Tyr-468, Arg-564, and His-592 each contribute to the ATP site.

Belongs to the polyphosphate kinase 1 (PPK1) family. Requires Mg(2+) as cofactor. Post-translationally, an intermediate of this reaction is the autophosphorylated ppk in which a phosphate is covalently linked to a histidine residue through a N-P bond.

The enzyme catalyses [phosphate](n) + ATP = [phosphate](n+1) + ADP. Catalyzes the reversible transfer of the terminal phosphate of ATP to form a long-chain polyphosphate (polyP). The polypeptide is Polyphosphate kinase (Neisseria meningitidis serogroup B (strain ATCC BAA-335 / MC58)).